The sequence spans 643 residues: Threonine--tRNA ligase (643 aa).

Residues 1 to 61 (MPIITLPDGS…EQDATLEIIT (61 aa)) form the TGS domain. The interval 243–534 (DHRKIGKALD…ITEEYAGFFP (292 aa)) is catalytic. Zn(2+) is bound by residues C334, H385, and H511.

The protein belongs to the class-II aminoacyl-tRNA synthetase family. In terms of assembly, homodimer. It depends on Zn(2+) as a cofactor.

The protein localises to the cytoplasm. It catalyses the reaction tRNA(Thr) + L-threonine + ATP = L-threonyl-tRNA(Thr) + AMP + diphosphate + H(+). Functionally, catalyzes the attachment of threonine to tRNA(Thr) in a two-step reaction: L-threonine is first activated by ATP to form Thr-AMP and then transferred to the acceptor end of tRNA(Thr). Also edits incorrectly charged L-seryl-tRNA(Thr). The polypeptide is Threonine--tRNA ligase (Haemophilus influenzae (strain PittGG)).